Here is a 276-residue protein sequence, read N- to C-terminus: Syntaxin-12 (276 aa).

Ser-2 carries the N-acetylserine modification. Over Ser-2–Arg-248 the chain is Cytoplasmic. Positions Ile-33 to Ser-131 form a coiled coil. Residues Ser-139, Ser-142, Ser-218, and Ser-225 each carry the phosphoserine modification. The 63-residue stretch at Leu-178–Ala-240 folds into the t-SNARE coiled-coil homology domain. Residues Lys-249–Ile-269 traverse the membrane as a helical; Anchor for type IV membrane protein segment. The Vesicular portion of the chain corresponds to Trp-270–Lys-276.

This sequence belongs to the syntaxin family. Interacts with NAPA and SNAP23. Identified in a complex containing STX6, STX12, VAMP4 and VTI1A. Associates with the BLOC-1 complex. Interacts with BLOC1S6. Interacts with GRIPAP1. Forms a complex with GRIP1, GRIA2 and NSG1; controls the intracellular fate of AMPAR and the endosomal sorting of the GRIA2 subunit toward recycling and membrane targeting. Interacts with NSG1. Interacts with TPC1. Interacts (via N-terminus) with VPS13B.

The protein resides in the endosome membrane. It localises to the golgi apparatus membrane. The protein localises to the endomembrane system. It is found in the early endosome membrane. Its subcellular location is the recycling endosome membrane. Its function is as follows. SNARE promoting fusion of transport vesicles with target membranes. Together with SNARE STX6, promotes movement of vesicles from endosomes to the cell membrane, and may therefore function in the endocytic recycling pathway. Through complex formation with GRIP1, GRIA2 and NSG1 controls the intracellular fate of AMPAR and the endosomal sorting of the GRIA2 subunit toward recycling and membrane targeting. This chain is Syntaxin-12 (STX12), found in Homo sapiens (Human).